Here is a 238-residue protein sequence, read N- to C-terminus: Uridylate kinase (238 aa).

Residue 12 to 15 (KLSG) coordinates ATP. The segment at 20 to 25 (GEKGFG) is involved in allosteric activation by GTP. Gly54 contacts UMP. 2 residues coordinate ATP: Gly55 and Arg59. Residues Asp72 and 133 to 140 (TGNPYFST) each bind UMP. Tyr166 and Asp169 together coordinate ATP.

Belongs to the UMP kinase family. Homohexamer.

The protein localises to the cytoplasm. It carries out the reaction UMP + ATP = UDP + ADP. Its pathway is pyrimidine metabolism; CTP biosynthesis via de novo pathway; UDP from UMP (UMPK route): step 1/1. Its activity is regulated as follows. Allosterically activated by GTP. Inhibited by UTP. In terms of biological role, catalyzes the reversible phosphorylation of UMP to UDP. This chain is Uridylate kinase, found in Clostridium botulinum (strain Langeland / NCTC 10281 / Type F).